We begin with the raw amino-acid sequence, 251 residues long: MSDIGDWFRSIPAITRYWFAATVAVPLIGKLGIISPAYFFLWPEAFLYRFQIWRPFTATFYFPVGPGTGFLYLVNLYFLYQYSTRLEAGAFDGRPADYLFMLLFNWICIVITGLAMDMQLLMIPLIMSVLYVWAQLNRDLIVSFWFGTRFKACYLPWVILGFNYIIGGSVINELIGNLVGHLYFFLMFRYPMDLGGRNFLSTPQFLYRWLPSRRGGVSGFGVPPASMRRAADQNGGGGRHNWGQGFRLGDQ.

Serine 2 carries the N-acetylserine modification. Topologically, residues 2–15 are cytoplasmic; sequence SDIGDWFRSIPAIT. Residues 16 to 31 form a helical membrane-spanning segment; the sequence is RYWFAATVAVPLIGKL. At 32 to 69 the chain is on the lumenal side; it reads GIISPAYFFLWPEAFLYRFQIWRPFTATFYFPVGPGTG. A helical membrane pass occupies residues 70–89; it reads FLYLVNLYFLYQYSTRLEAG. Residues 90-94 are Cytoplasmic-facing; the sequence is AFDGR. Residues 95 to 115 traverse the membrane as a helical segment; sequence PADYLFMLLFNWICIVITGLA. Over 116–122 the chain is Lumenal; sequence MDMQLLM. Residues 123-137 traverse the membrane as a helical segment; the sequence is IPLIMSVLYVWAQLN. Residues 138-154 lie on the Cytoplasmic side of the membrane; it reads RDLIVSFWFGTRFKACY. Residues 155–166 traverse the membrane as a helical segment; it reads LPWVILGFNYII. At 167–170 the chain is on the lumenal side; the sequence is GGSV. A helical membrane pass occupies residues 171-189; the sequence is INELIGNLVGHLYFFLMFR. At 190–251 the chain is on the cytoplasmic side; sequence YPMDLGGRNF…WGQGFRLGDQ (62 aa). Serine 201 is modified (phosphoserine). Threonine 202 carries the phosphothreonine modification. At serine 226 the chain carries Phosphoserine. The interval 229-251 is disordered; the sequence is RAADQNGGGGRHNWGQGFRLGDQ. The SHP-box motif lies at 241–248; that stretch reads NWGQGFRL.

It belongs to the derlin family. As to quaternary structure, homotetramer. The four subunits of the tetramer are arranged in a twofold symmetry. Forms homo- and heterooligomers with DERL2 and DERL3; binding to DERL3 is poorer than that between DERL2 and DERL3. Interacts (via SHP-box motif) with VCP. Interacts with AMFR, SELENOS, SEL1L, SELENOK and SYVN1, as well as with SEL1L-SYVN1 and VCP-SELENOS protein complexes; this interaction is weaker than that observed between DERL2 and these complexes. Interacts with NGLY1 and YOD1. Does not bind to EDEM1. Interacts with DNAJB9. Interacts with RNF103. Interacts with HM13. Interacts with XBP1 isoform 1 (via luminal/ectodomain domain); the interaction obviates the need for ectodomain shedding prior HM13/SPP-mediated XBP1 isoform 1 cleavage. Interacts with the signal recognition particle/SRP and the SRP receptor; in the process of endoplasmic reticulum stress-induced pre-emptive quality control. May interact with UBXN6. Interacts with ZFAND2B; probably through VCP. Interacts with CCDC47. Interacts with C18orf32. May interact with TRAM1. Forms a complex with SVIP and VCP/p97. In terms of tissue distribution, widely expressed, with lowest levels in brain and heart.

Its subcellular location is the endoplasmic reticulum membrane. Functionally, functional component of endoplasmic reticulum-associated degradation (ERAD) for misfolded lumenal proteins. Forms homotetramers which encircle a large channel traversing the endoplasmic reticulum (ER) membrane. This allows the retrotranslocation of misfolded proteins from the ER into the cytosol where they are ubiquitinated and degraded by the proteasome. The channel has a lateral gate within the membrane which provides direct access to membrane proteins with no need to reenter the ER lumen first. May mediate the interaction between VCP and the misfolded protein. Also involved in endoplasmic reticulum stress-induced pre-emptive quality control, a mechanism that selectively attenuates the translocation of newly synthesized proteins into the endoplasmic reticulum and reroutes them to the cytosol for proteasomal degradation. By controlling the steady-state expression of the IGF1R receptor, indirectly regulates the insulin-like growth factor receptor signaling pathway. The chain is Derlin-1 from Mus musculus (Mouse).